A 297-amino-acid polypeptide reads, in one-letter code: Homoserine kinase (297 aa).

82 to 92 contacts ATP; the sequence is PLTRGLGSSAS.

This sequence belongs to the GHMP kinase family. Homoserine kinase subfamily.

The protein resides in the cytoplasm. The catalysed reaction is L-homoserine + ATP = O-phospho-L-homoserine + ADP + H(+). Its pathway is amino-acid biosynthesis; L-threonine biosynthesis; L-threonine from L-aspartate: step 4/5. Functionally, catalyzes the ATP-dependent phosphorylation of L-homoserine to L-homoserine phosphate. The polypeptide is Homoserine kinase (Bacillus cereus (strain ATCC 14579 / DSM 31 / CCUG 7414 / JCM 2152 / NBRC 15305 / NCIMB 9373 / NCTC 2599 / NRRL B-3711)).